Reading from the N-terminus, the 316-residue chain is Transaldolase (316 aa).

The active-site Schiff-base intermediate with substrate is K132.

It belongs to the transaldolase family. Type 1 subfamily. Homodimer.

Its subcellular location is the cytoplasm. It carries out the reaction D-sedoheptulose 7-phosphate + D-glyceraldehyde 3-phosphate = D-erythrose 4-phosphate + beta-D-fructose 6-phosphate. It functions in the pathway carbohydrate degradation; pentose phosphate pathway; D-glyceraldehyde 3-phosphate and beta-D-fructose 6-phosphate from D-ribose 5-phosphate and D-xylulose 5-phosphate (non-oxidative stage): step 2/3. Functionally, transaldolase is important for the balance of metabolites in the pentose-phosphate pathway. The chain is Transaldolase from Vibrio vulnificus (strain YJ016).